The following is a 1555-amino-acid chain: Protein TASOR (1555 aa).

Disordered regions lie at residues 1–74, 645–711, 744–773, 870–911, and 1390–1462; these read MEEN…DKRA, QKKK…RQET, QNSTEELPSQKLKNLSQAHDTEREGAGQDQ, ALPN…TTPS, and NQGD…PTLD. Residues 35 to 47 show a composition bias toward polar residues; it reads VQQTLKRTNSTES. Residues 61-71 are compositionally biased toward basic residues; it reads RRFQIPRKSRD. Residues 667-688 show a composition bias toward basic and acidic residues; the sequence is DRQSEKAWKHRKCEENVHHDNE. Polar residues-rich tracts occupy residues 692 to 702 and 744 to 761; these read SAQSLISSLGG and QNSTEELPSQKLKNLSQA. The segment covering 888–904 has biased composition (basic and acidic residues); that stretch reads PLHETERQRPRHDRDYC. The span at 1402-1417 shows a compositional bias: acidic residues; it reads SKEEEDMSLDSEDDTP. Residues 1448-1458 show a composition bias toward polar residues; it reads ESPSTLNQGKT.

This sequence belongs to the TASOR family. Component of the HUSH complex.

It localises to the nucleus. The protein localises to the chromosome. Component of the HUSH complex, a multiprotein complex that mediates epigenetic repression. The HUSH complex is recruited to genomic loci rich in H3K9me3 and is probably required to maintain transcriptional silencing by promoting further deposition of H3K9me3. This is Protein TASOR from Xenopus laevis (African clawed frog).